A 575-amino-acid polypeptide reads, in one-letter code: DNA-directed RNA polymerase subunit beta' (575 aa).

The protein belongs to the RNA polymerase beta' chain family. In terms of assembly, in plastids the minimal PEP RNA polymerase catalytic core is composed of four subunits: alpha, beta, beta', and beta''. When a (nuclear-encoded) sigma factor is associated with the core the holoenzyme is formed, which can initiate transcription.

The protein localises to the plastid. Its subcellular location is the apicoplast. The enzyme catalyses RNA(n) + a ribonucleoside 5'-triphosphate = RNA(n+1) + diphosphate. In terms of biological role, DNA-dependent RNA polymerase catalyzes the transcription of DNA into RNA using the four ribonucleoside triphosphates as substrates. In Plasmodium falciparum (isolate 3D7), this protein is DNA-directed RNA polymerase subunit beta' (rpoC1).